We begin with the raw amino-acid sequence, 102 residues long: Small ribosomal subunit protein uS10 (102 aa).

The protein belongs to the universal ribosomal protein uS10 family. As to quaternary structure, part of the 30S ribosomal subunit.

Functionally, involved in the binding of tRNA to the ribosomes. The polypeptide is Small ribosomal subunit protein uS10 (Finegoldia magna (strain ATCC 29328 / DSM 20472 / WAL 2508) (Peptostreptococcus magnus)).